A 165-amino-acid polypeptide reads, in one-letter code: Ribosome maturation factor RimM (165 aa).

Residues 90–161 (EDEYFIVDLV…LITIRPSGEW (72 aa)) enclose the PRC barrel domain.

This sequence belongs to the RimM family. Binds ribosomal protein uS19.

The protein localises to the cytoplasm. Its function is as follows. An accessory protein needed during the final step in the assembly of 30S ribosomal subunit, possibly for assembly of the head region. Essential for efficient processing of 16S rRNA. May be needed both before and after RbfA during the maturation of 16S rRNA. It has affinity for free ribosomal 30S subunits but not for 70S ribosomes. The polypeptide is Ribosome maturation factor RimM (Clostridium perfringens (strain ATCC 13124 / DSM 756 / JCM 1290 / NCIMB 6125 / NCTC 8237 / Type A)).